A 296-amino-acid chain; its full sequence is NAD kinase (296 aa).

Asp74 serves as the catalytic Proton acceptor. Residues 74-75, 148-149, Arg176, Asp178, and 189-194 each bind NAD(+); these read DG, ND, and TAYALS.

This sequence belongs to the NAD kinase family. A divalent metal cation is required as a cofactor.

It is found in the cytoplasm. The catalysed reaction is NAD(+) + ATP = ADP + NADP(+) + H(+). Its function is as follows. Involved in the regulation of the intracellular balance of NAD and NADP, and is a key enzyme in the biosynthesis of NADP. Catalyzes specifically the phosphorylation on 2'-hydroxyl of the adenosine moiety of NAD to yield NADP. This chain is NAD kinase, found in Nitrosomonas eutropha (strain DSM 101675 / C91 / Nm57).